Reading from the N-terminus, the 67-residue chain is UPF0253 protein VS_2370 (67 aa).

The protein belongs to the UPF0253 family.

This chain is UPF0253 protein VS_2370, found in Vibrio atlanticus (strain LGP32) (Vibrio splendidus (strain Mel32)).